A 78-amino-acid polypeptide reads, in one-letter code: UPF0349 protein SSP1836 (78 aa).

This sequence belongs to the UPF0349 family.

The polypeptide is UPF0349 protein SSP1836 (Staphylococcus saprophyticus subsp. saprophyticus (strain ATCC 15305 / DSM 20229 / NCIMB 8711 / NCTC 7292 / S-41)).